A 248-amino-acid chain; its full sequence is MQIEQLQINEIDNLHQVSSVEVGQHLYWQIGNFQVHAQVLITSWVVVAILVALPATTTGNLQSIPTGTQNFIEYVLEFIRDLTRTQMGEEGYRPWVPFIGTMFLFIFASNWSGALLPWRVIQLPHGELAAPTNDINTTVALALLTSVAYFYAGLYKRGFSYFGKYIQPTPILLPINILEDFTKPLSLSFRLFGNILADELVVAVLVSLVPLIVPVPMMLLGLFTSGIQALIFATLAAAYIGESMEGHH.

A run of 4 helical transmembrane segments spans residues 96–116 (VPFIGTMFLFIFASNWSGALL), 135–155 (INTTVALALLTSVAYFYAGLY), 200–220 (LVVAVLVSLVPLIVPVPMMLL), and 221–241 (GLFTSGIQALIFATLAAAYIG).

This sequence belongs to the ATPase A chain family. As to quaternary structure, F-type ATPases have 2 components, CF(1) - the catalytic core - and CF(0) - the membrane proton channel. CF(1) has five subunits: alpha(3), beta(3), gamma(1), delta(1), epsilon(1). CF(0) has four main subunits: a, b, b' and c.

The protein localises to the plastid. It localises to the chloroplast thylakoid membrane. In terms of biological role, key component of the proton channel; it plays a direct role in the translocation of protons across the membrane. The protein is ATP synthase subunit a, chloroplastic of Adiantum capillus-veneris (Maidenhair fern).